The chain runs to 187 residues: Lipoprotein signal peptidase (187 aa).

3 consecutive transmembrane segments (helical) span residues 12-32, 68-88, and 91-111; these read VAVF…TKMW, MTWL…VLAV, and ISMK…GNLI. Residues aspartate 127 and aspartate 140 contribute to the active site. Residues 141-161 traverse the membrane as a helical segment; the sequence is IFLMLAGVAAVLLLFLGEPFS. The tract at residues 167 to 187 is disordered; it reads EANGKTLGDDANATDDGAKAA.

Belongs to the peptidase A8 family.

The protein localises to the cell membrane. The enzyme catalyses Release of signal peptides from bacterial membrane prolipoproteins. Hydrolyzes -Xaa-Yaa-Zaa-|-(S,diacylglyceryl)Cys-, in which Xaa is hydrophobic (preferably Leu), and Yaa (Ala or Ser) and Zaa (Gly or Ala) have small, neutral side chains.. It participates in protein modification; lipoprotein biosynthesis (signal peptide cleavage). Functionally, this protein specifically catalyzes the removal of signal peptides from prolipoproteins. This chain is Lipoprotein signal peptidase, found in Bifidobacterium adolescentis (strain ATCC 15703 / DSM 20083 / NCTC 11814 / E194a).